A 205-amino-acid polypeptide reads, in one-letter code: Holliday junction branch migration complex subunit RuvA (205 aa).

A domain I region spans residues 1–64 (MIGRLSGILV…EDAQLLYGFI (64 aa)). The domain II stretch occupies residues 65-143 (TKQERALFRL…SLLEASAGSE (79 aa)). A flexible linker region spans residues 144 to 156 (REFMLQSNYTPAA). The domain III stretch occupies residues 157 to 205 (AVDSAEEDAISALLSLGYKPAQASKSVSAAFKEGMSSETLIKAALKSML).

Belongs to the RuvA family. Homotetramer. Forms an RuvA(8)-RuvB(12)-Holliday junction (HJ) complex. HJ DNA is sandwiched between 2 RuvA tetramers; dsDNA enters through RuvA and exits via RuvB. An RuvB hexamer assembles on each DNA strand where it exits the tetramer. Each RuvB hexamer is contacted by two RuvA subunits (via domain III) on 2 adjacent RuvB subunits; this complex drives branch migration. In the full resolvosome a probable DNA-RuvA(4)-RuvB(12)-RuvC(2) complex forms which resolves the HJ.

It is found in the cytoplasm. In terms of biological role, the RuvA-RuvB-RuvC complex processes Holliday junction (HJ) DNA during genetic recombination and DNA repair, while the RuvA-RuvB complex plays an important role in the rescue of blocked DNA replication forks via replication fork reversal (RFR). RuvA specifically binds to HJ cruciform DNA, conferring on it an open structure. The RuvB hexamer acts as an ATP-dependent pump, pulling dsDNA into and through the RuvAB complex. HJ branch migration allows RuvC to scan DNA until it finds its consensus sequence, where it cleaves and resolves the cruciform DNA. The sequence is that of Holliday junction branch migration complex subunit RuvA from Shewanella frigidimarina (strain NCIMB 400).